The sequence spans 809 residues: Sodium/hydrogen exchanger 2 (809 aa).

7 consecutive transmembrane segments (helical) span residues 107 to 127 (IVPE…IIFG), 138 to 158 (TDVF…YFMP), 169 to 189 (IFWY…VSLF), 209 to 229 (LFGS…FENI), 237 to 257 (ILVF…YNLF), 278 to 298 (FFVV…IAAF), and 308 to 328 (VIEP…AEMF). N-linked (GlcNAc...) asparagine glycosylation occurs at Asn-350. 4 helical membrane-spanning segments follow: residues 361–381 (YFMK…MGVS), 392–412 (AFVC…VFVL), 430–450 (FIIA…FLLP), and 459–479 (LFIT…GITI). Basic and acidic residues-rich tracts occupy residues 648–660 (IRKD…ERRA) and 793–809 (RASE…SDKP). Disordered stretches follow at residues 648-700 (IRKD…EADA) and 734-809 (EVDA…SDKP).

The protein belongs to the monovalent cation:proton antiporter 1 (CPA1) transporter (TC 2.A.36) family. Interacts with CHP1 and CHP2. High levels in intestine and kidney. Strongly expressed in gastric epithelial cells, with particularly high expression levels in mucous cells.

Its subcellular location is the apical cell membrane. The enzyme catalyses Na(+)(in) + H(+)(out) = Na(+)(out) + H(+)(in). In terms of biological role, plasma membrane Na(+)/H(+) antiporter. Mediates the electroneutral exchange of intracellular H(+) ions for extracellular Na(+). Major apical Na(+)/H(+) exchanger in the base of the colonic crypt. Controls in the colonic crypt intracellular pH (pHi) to direct colonic epithelial cell differentiation into the absorptive enterocyte lineage at the expense of the secretory lineage. This chain is Sodium/hydrogen exchanger 2 (SLC9A2), found in Oryctolagus cuniculus (Rabbit).